Consider the following 318-residue polypeptide: Protein FdhE homolog (318 aa).

It belongs to the FdhE family.

The protein resides in the cytoplasm. Functionally, necessary for formate dehydrogenase activity. This Pseudomonas putida (strain ATCC 47054 / DSM 6125 / CFBP 8728 / NCIMB 11950 / KT2440) protein is Protein FdhE homolog.